We begin with the raw amino-acid sequence, 178 residues long: uncharacterized protein (178 aa).

The protein belongs to the mycobacterial PPE family.

This is an uncharacterized protein from Mycobacterium tuberculosis (strain CDC 1551 / Oshkosh).